Consider the following 359-residue polypeptide: Ribosomal RNA small subunit methyltransferase mra1 (359 aa).

The span at 1-10 (MPTYSKRKSR) shows a compositional bias: basic residues. Disordered regions lie at residues 1 to 62 (MPTY…EDEE) and 98 to 118 (VKSD…VKAR). At serine 12 the chain carries Phosphoserine. The segment covering 18-39 (KTNQPKFIKRSQSSETITSGET) has biased composition (polar residues). Threonine 33 is modified (phosphothreonine). Phosphoserine is present on serine 100. S-adenosyl-L-methionine contacts are provided by residues leucine 287, glycine 314, 319-321 (GPD), and 334-339 (ISDYPL).

This sequence belongs to the class IV-like SAM-binding methyltransferase superfamily. RNA methyltransferase NEP1 family. In terms of assembly, homodimer.

Its subcellular location is the nucleus. It is found in the nucleolus. It carries out the reaction a pseudouridine in rRNA + S-adenosyl-L-methionine = an N(1)-methylpseudouridine in rRNA + S-adenosyl-L-homocysteine + H(+). Functionally, S-adenosyl-L-methionine-dependent pseudouridine N(1)-methyltransferase that methylates the pseudouridine corresponding to position 1189 (Psi1189) in S.cerevisiae 18S rRNA. Involved the biosynthesis of the hypermodified N1-methyl-N3-(3-amino-3-carboxypropyl) pseudouridine (m1acp3-Psi) conserved in eukaryotic 18S rRNA. Also has an essential role in 40S ribosomal subunit biogenesis independent on its methyltransferase activity, facilitating the incorporation of ribosomal protein S19 during the formation of pre-ribosomes. Essential for cell growth. It also has a key role in promoting the mating function. This chain is Ribosomal RNA small subunit methyltransferase mra1, found in Schizosaccharomyces pombe (strain 972 / ATCC 24843) (Fission yeast).